A 183-amino-acid polypeptide reads, in one-letter code: Ribosome rescue factor SmrB (183 aa).

Residues 98–173 (LDLHGLTQLQ…GDAALLVLIE (76 aa)) form the Smr domain.

The protein belongs to the SmrB family. As to quaternary structure, associates with collided ribosomes, but not with correctly translating polysomes.

Its function is as follows. Acts as a ribosome collision sensor. Detects stalled/collided disomes (pairs of ribosomes where the leading ribosome is stalled and a second ribosome has collided with it) and endonucleolytically cleaves mRNA at the 5' boundary of the stalled ribosome. Stalled/collided disomes form a new interface (primarily via the 30S subunits) that binds SmrB. Cleaved mRNA becomes available for tmRNA ligation, leading to ribosomal subunit dissociation and rescue of stalled ribosomes. In Escherichia coli O17:K52:H18 (strain UMN026 / ExPEC), this protein is Ribosome rescue factor SmrB.